Reading from the N-terminus, the 247-residue chain is Synaptonemal complex central element protein 1-like (247 aa).

Residues Ser71–Ser196 adopt a coiled-coil conformation. Positions Glu189 to Cys247 are disordered. Residues Gln220–Pro241 are compositionally biased toward basic and acidic residues.

Belongs to the SYCE family. In terms of tissue distribution, isoform 1 is abundantly expressed in testis and weakly in ovary, it is not found in other tissues. Isoform 2 is expressed in testis and poorly in brain, heart, lung and other examined tissues.

Its function is as follows. May be involved in meiosis. Isoform 1 may be involved in meiosis during spermatogenesis while isoform 2 is probably related to a later stage of meiosis, in the development stage of secondary spermatocytes and spermatids. In Mus musculus (Mouse), this protein is Synaptonemal complex central element protein 1-like (Syce1l).